The following is a 354-amino-acid chain: Deoxyribonuclease-2-beta (354 aa).

The first 22 residues, 1 to 22 (MTAKPLRTVLSLLFFALSGVLG), serve as a signal peptide directing secretion. N-linked (GlcNAc...) asparagine glycosylation is found at N70, N77, N95, N98, N114, N129, N208, N271, and N319.

The protein belongs to the DNase II family. In terms of tissue distribution, highly expressed in the eye lens. Detected in liver, but not in the other tissues tested.

Its subcellular location is the lysosome. It carries out the reaction Endonucleolytic cleavage to nucleoside 3'-phosphates and 3'-phosphooligonucleotide end-products.. Its function is as follows. Hydrolyzes DNA under acidic conditions. Does not require divalent cations for activity. Participates in the degradation of nuclear DNA during lens cell differentiation. This is Deoxyribonuclease-2-beta (Dnase2b) from Mus musculus (Mouse).